We begin with the raw amino-acid sequence, 173 residues long: Alpha-crystallin A chain (173 aa).

Met1 carries the post-translational modification N-acetylmethionine. A required for complex formation with BFSP1 and BFSP2; during homooligomerization, mediates the association of 2 dimers to form a tetramer region spans residues 1–63 (MDVTIQHPWF…RTVLDSGISE (63 aa)). Gln6 is subject to Deamidated glutamine; partial. A Phosphoserine modification is found at Ser45. At Gln50 the chain carries Deamidated glutamine; partial. Positions 52 to 164 (LFRTVLDSGI…AERAIPVSRE (113 aa)) constitute a sHSP domain. An N6-acetyllysine modification is found at Lys70. Gln90 carries the post-translational modification Deamidated glutamine; partial. Lys99 is subject to N6-acetyllysine. His100 provides a ligand contact to Zn(2+). Asn101 is subject to Deamidated asparagine; partial. Zn(2+) contacts are provided by Glu102 and His107. Ser122 is modified (phosphoserine). The residue at position 123 (Asn123) is a Deamidated asparagine; partial. An intrachain disulfide couples Cys131 to Cys142. A Deamidated glutamine; partial modification is found at Gln147. His154 serves as a coordination point for Zn(2+). O-linked (GlcNAc) serine glycosylation is present at Ser162.

This sequence belongs to the small heat shock protein (HSP20) family. In terms of assembly, heteropolymer composed of three CRYAA and one CRYAB subunits. Inter-subunit bridging via zinc ions enhances stability, which is crucial as there is no protein turn over in the lens. Can also form homodimers and homotetramers (dimers of dimers) which serve as the building blocks of homooligomers. Within homooligomers, the zinc-binding motif is created from residues of 3 different molecules. His-100 and Glu-102 from one molecule are ligands of the zinc ion, and His-107 and His-154 residues from additional molecules complete the site with tetrahedral coordination geometry. Part of a complex required for lens intermediate filament formation composed of BFSP1, BFSP2 and CRYAA. Post-translationally, O-glycosylated; contains N-acetylglucosamine side chains. In terms of processing, deamidation of Asn-101 in lens occurs mostly during the first 30 years of age, followed by a small additional amount of deamidation (approximately 5%) during the next approximately 38 years, resulting in a maximum of approximately 50% deamidation during the lifetime of the individual. Phosphorylation on Ser-122 seems to be developmentally regulated. Absent in the first months of life, it appears during the first 12 years of human lifetime. The relative amount of phosphorylated form versus unphosphorylated form does not change over the lifetime of the individual. Post-translationally, acetylation at Lys-70 may increase chaperone activity. In terms of processing, undergoes age-dependent proteolytical cleavage at the C-terminus. Alpha-crystallin A(1-172) is the most predominant form produced most rapidly during the first 12 years of age and after this age is present in approximately 50% of the lens molecules. In young individuals and during the first approximately 30 years of life, less than half molecules contain an intramolecular disulfide bond (oxidized form), while in the remaining fraction the cysteines are in the free sulfhydryl form (reduced form). With aging, the amount of oxidized form increases up to 90% and it becomes a major constituent of high molecular weight aggregates, concomitant with an age-dependent loss of its chaperone activity. The reduced form is undetectable in cataractous lenses. As to expression, expressed in the eye lens (at protein level).

The protein localises to the cytoplasm. It is found in the nucleus. Contributes to the transparency and refractive index of the lens. In its oxidized form (absence of intramolecular disulfide bond), acts as a chaperone, preventing aggregation of various proteins under a wide range of stress conditions. Required for the correct formation of lens intermediate filaments as part of a complex composed of BFSP1, BFSP2 and CRYAA. This is Alpha-crystallin A chain (CRYAA) from Homo sapiens (Human).